A 39-amino-acid polypeptide reads, in one-letter code: Large ribosomal subunit protein bL36 (39 aa).

It belongs to the bacterial ribosomal protein bL36 family.

This chain is Large ribosomal subunit protein bL36, found in Pediococcus pentosaceus (strain ATCC 25745 / CCUG 21536 / LMG 10740 / 183-1w).